Here is a 315-residue protein sequence, read N- to C-terminus: Eukaryotic translation initiation factor 2 subunit 1 (315 aa).

In terms of domain architecture, S1 motif spans 17-88 (DDVVMVNVRS…DKGYIDLSKR (72 aa)). 2 positions are modified to phosphoserine: S49 and S52. The interval 292-315 (RLEKENAEVDGDDDAEEMEAKTED) is disordered. Residues 299 to 308 (EVDGDDDAEE) are compositionally biased toward acidic residues.

Belongs to the eIF-2-alpha family. As to quaternary structure, eukaryotic translation initiation factor 2 eIF2 is a heterotrimeric complex composed of an alpha, a beta and a gamma subunit. Phosphorylation at Ser-49 and Ser-52 stabilizes the eIF-2/GDP/eIF2B complex and prevents GDP/GTP exchange reaction, thus impairing the recycling of eIF-2 between successive rounds of initiation and leading to global inhibition of translation, while concomitantly initiating the preferential translation of integrated stress response (ISR)-specific mRNAs.

It is found in the cytoplasm. Its subcellular location is the stress granule. The protein localises to the cytosol. Its activity is regulated as follows. Activity is regulated by phosphorylation at Ser-49 and Ser-52, which stabilizes the eIF-2/GDP/eIF2B complex and prevents the eIF2B-mediated exchange of GDP for GTP, thereby preventing the formation of the 43S pre-initiation complex (PIC). This results in the global attenuation of 5' cap-dependent protein synthesis and concomitant translation of ISR-specific mRNAs that contain a short upstream open reading frame (uORF) in their 5' UTR. Functionally, functions in the early steps of protein synthesis by forming a ternary complex with GTP and initiator tRNA. This complex binds to a 40S ribosomal subunit, followed by mRNA binding to form a 43S pre-initiation complex. Junction of the 60S ribosomal subunit to form the 80S initiation complex is preceded by hydrolysis of the GTP bound to eIF-2 and release of an eIF-2-GDP binary complex. In order for eIF-2 to recycle and catalyze another round of initiation, the GDP bound to eIF-2 must exchange with GTP by way of a reaction catalyzed by eIF2B. EIF2S1/eIF2-alpha is a key component of the integrated stress response (ISR), required for adaptation to various stress: phosphorylation by metabolic-stress sensing protein kinases in response to stress converts EIF2S1/eIF-2-alpha in a global protein synthesis inhibitor, leading to a attenuation of cap-dependent translation, while concomitantly initiating the preferential translation of ISR-specific mRNAs, such as the transcriptional activators ATF4 and QRICH1. This chain is Eukaryotic translation initiation factor 2 subunit 1 (eif2s1), found in Xenopus tropicalis (Western clawed frog).